A 186-amino-acid chain; its full sequence is Large ribosomal subunit protein uL22 (186 aa).

It belongs to the universal ribosomal protein uL22 family. Component of the large ribosomal subunit (LSU). Mature N.crassa ribosomes consist of a small (40S) and a large (60S) subunit. The 40S small subunit contains 1 molecule of ribosomal RNA (18S rRNA) and at least 32 different proteins. The large 60S subunit contains 3 rRNA molecules (26S, 5.8S and 5S rRNA) and at least 42 different proteins.

The protein localises to the cytoplasm. Its function is as follows. Component of the ribosome, a large ribonucleoprotein complex responsible for the synthesis of proteins in the cell. The small ribosomal subunit (SSU) binds messenger RNAs (mRNAs) and translates the encoded message by selecting cognate aminoacyl-transfer RNA (tRNA) molecules. The large subunit (LSU) contains the ribosomal catalytic site termed the peptidyl transferase center (PTC), which catalyzes the formation of peptide bonds, thereby polymerizing the amino acids delivered by tRNAs into a polypeptide chain. The nascent polypeptides leave the ribosome through a tunnel in the LSU and interact with protein factors that function in enzymatic processing, targeting, and the membrane insertion of nascent chains at the exit of the ribosomal tunnel. In Neurospora crassa (strain ATCC 24698 / 74-OR23-1A / CBS 708.71 / DSM 1257 / FGSC 987), this protein is Large ribosomal subunit protein uL22 (rpl-17).